A 538-amino-acid polypeptide reads, in one-letter code: Probable folate-biopterin transporter 9, chloroplastic (538 aa).

The N-terminal 57 residues, 1–57 (MNNPLLSISNPVKFFKPPIPYRISLNTTINKKQKHQSKTLVVKSNKRSTTSLTSSVS), are a transit peptide targeting the chloroplast. The next 12 membrane-spanning stretches (helical) occupy residues 85–105 (VLLCALGYWVQGLRCFSWLAL), 129–149 (LPMVAKPLYGVLSDVLYIGGA), 152–172 (VPYISVGVLLQGLAWGSLAIF), 178–198 (VLPSLMAFILLSNLGASITEV), 220–240 (ALMASAVGGILGNLLGGYCLL), 246–266 (ILFLAFTALLSLQLIVSLSSK), 309–329 (LIWIVSSIALVPLLSGSVFCY), 339–359 (SVIGMSKVIGQLMLLCLTVVY), 370–390 (ALIHIVQLLYAFSLLFDYILV), 395–415 (LAFGISNTAFVLCFSSVAEIL), 447–467 (LCLSSVVSGFTGVGMANMIGI), and 479–499 (ILIQSLAALVPLWFIHYVPML).

This sequence belongs to the major facilitator superfamily. Folate-biopterin transporter (TC 2.A.71) family.

It is found in the plastid. It localises to the chloroplast membrane. In terms of biological role, could mediate folate transport. The polypeptide is Probable folate-biopterin transporter 9, chloroplastic (Arabidopsis thaliana (Mouse-ear cress)).